We begin with the raw amino-acid sequence, 384 residues long: Epoxyqueuosine reductase (384 aa).

The Proton donor role is filled by Asp144. One can recognise a 4Fe-4S ferredoxin-type domain in the interval 186 to 218 (LPLPVDQPVEEGCGKCVACMTICPTGAIVEPYT). [4Fe-4S] cluster-binding residues include Cys198, Cys201, Cys204, Cys208, Cys224, Cys251, Cys254, and Cys258.

This sequence belongs to the QueG family. Monomer. Cob(II)alamin serves as cofactor. It depends on [4Fe-4S] cluster as a cofactor.

The protein resides in the cytoplasm. It catalyses the reaction epoxyqueuosine(34) in tRNA + AH2 = queuosine(34) in tRNA + A + H2O. The protein operates within tRNA modification; tRNA-queuosine biosynthesis. Catalyzes the conversion of epoxyqueuosine (oQ) to queuosine (Q), which is a hypermodified base found in the wobble positions of tRNA(Asp), tRNA(Asn), tRNA(His) and tRNA(Tyr). In Salmonella typhimurium (strain LT2 / SGSC1412 / ATCC 700720), this protein is Epoxyqueuosine reductase.